We begin with the raw amino-acid sequence, 218 residues long: MRLMLLGGPGAGKGTQASLLINRYKIPQISTGDMLRAAIAKGTPLGLSAQKIMESGGLVSDDIIIGLVKERLKNPDCDRGFLFDGFPRTLVQAEALKDAEIHLDHVIEIAVDDEEIIERISGRRIHQPSGRVYHVVNQPPKNPGVDDITGEPLIQRDDDKEETIRKRLQVYHSQTAPLVQYYKEWAESGSKEAPKFHTISGTGTVEQIFDNIVTILET.

10 to 15 (GAGKGT) is a binding site for ATP. The segment at 30 to 59 (STGDMLRAAIAKGTPLGLSAQKIMESGGLV) is NMP. Residues Thr31, Arg36, 57 to 59 (GLV), 85 to 88 (GFPR), and Gln92 contribute to the AMP site. The tract at residues 122–159 (GRRIHQPSGRVYHVVNQPPKNPGVDDITGEPLIQRDDD) is LID. ATP contacts are provided by residues Arg123 and 132 to 133 (VY). 2 residues coordinate AMP: Arg156 and Arg167. ATP is bound at residue Gly203.

The protein belongs to the adenylate kinase family. Monomer.

The protein localises to the cytoplasm. The catalysed reaction is AMP + ATP = 2 ADP. The protein operates within purine metabolism; AMP biosynthesis via salvage pathway; AMP from ADP: step 1/1. Catalyzes the reversible transfer of the terminal phosphate group between ATP and AMP. Plays an important role in cellular energy homeostasis and in adenine nucleotide metabolism. The polypeptide is Adenylate kinase (Legionella pneumophila (strain Corby)).